The sequence spans 213 residues: Probable lipid phosphate phosphatase beta (213 aa).

A run of 5 helical transmembrane segments spans residues 30-50, 67-87, 118-138, 158-178, and 181-201; these read PFLP…RFSF, VPFL…KLIF, VFFV…SMTG, VEVV…RILL, and HYVL…LFAL.

It belongs to the PA-phosphatase related phosphoesterase family.

It localises to the membrane. This is Probable lipid phosphate phosphatase beta (LPPB) from Arabidopsis thaliana (Mouse-ear cress).